The primary structure comprises 350 residues: S-adenosylmethionine:tRNA ribosyltransferase-isomerase (350 aa).

This sequence belongs to the QueA family. As to quaternary structure, monomer.

The protein resides in the cytoplasm. It carries out the reaction 7-aminomethyl-7-carbaguanosine(34) in tRNA + S-adenosyl-L-methionine = epoxyqueuosine(34) in tRNA + adenine + L-methionine + 2 H(+). The protein operates within tRNA modification; tRNA-queuosine biosynthesis. Its function is as follows. Transfers and isomerizes the ribose moiety from AdoMet to the 7-aminomethyl group of 7-deazaguanine (preQ1-tRNA) to give epoxyqueuosine (oQ-tRNA). The sequence is that of S-adenosylmethionine:tRNA ribosyltransferase-isomerase from Bacillus cereus (strain G9842).